Consider the following 265-residue polypeptide: Methyl-coenzyme M reductase II subunit gamma (265 aa).

Residue arginine 123 participates in coenzyme M binding.

The protein belongs to the methyl-coenzyme M reductase gamma subunit family. As to quaternary structure, MCR is a hexamer of two alpha, two beta, and two gamma chains, forming a dimer of heterotrimers. Coenzyme F430 is required as a cofactor.

It carries out the reaction coenzyme B + methyl-coenzyme M = methane + coenzyme M-coenzyme B heterodisulfide. It participates in one-carbon metabolism; methyl-coenzyme M reduction; methane from methyl-coenzyme M: step 1/1. Its function is as follows. Component of the methyl-coenzyme M reductase (MCR) I that catalyzes the reductive cleavage of methyl-coenzyme M (CoM-S-CH3 or 2-(methylthio)ethanesulfonate) using coenzyme B (CoB or 7-mercaptoheptanoylthreonine phosphate) as reductant which results in the production of methane and the mixed heterodisulfide of CoB and CoM (CoM-S-S-CoB). This is the final step in methanogenesis. This chain is Methyl-coenzyme M reductase II subunit gamma (mrtG), found in Methanothermobacter marburgensis (strain ATCC BAA-927 / DSM 2133 / JCM 14651 / NBRC 100331 / OCM 82 / Marburg) (Methanobacterium thermoautotrophicum).